A 155-amino-acid polypeptide reads, in one-letter code: Large ribosomal subunit protein uL13 (155 aa).

This sequence belongs to the universal ribosomal protein uL13 family. Part of the 50S ribosomal subunit.

In terms of biological role, this protein is one of the early assembly proteins of the 50S ribosomal subunit, although it is not seen to bind rRNA by itself. It is important during the early stages of 50S assembly. This Rickettsia felis (strain ATCC VR-1525 / URRWXCal2) (Rickettsia azadi) protein is Large ribosomal subunit protein uL13.